A 365-amino-acid chain; its full sequence is MGELRRSPLHERHVELGAKTAAFGGWEMPIEYAGRGVLAEHAAVRGAVGIFDVSHLGKARVAGPGAAEFVNTCLTNDLRRVGPGQAQYTLCCDETGGVVDDLIAYYYAVDNVFLVPNAANTAEVVRRLAAQAPAGVAVTDLHTEFAVLAVQGPAAPEVLRKLGLPADGAYMSFADAEWKGRPVIVCRSGYTGEAGFELLPRWADAVPLWDELLTVVTGLGGLPCGLGARDTLRTEMGYPLHGQDLSLSISPVQARSGWAVGWDKPAFWGREALLAERAAGPARSLWGLRSNDRGIPRPHMRVSGPDGAELGEVTSGTFSPTLRQGIGLALLDRSVTAGDEVAVDVRGRVSTMTVVRPPFVSASPR.

Belongs to the GcvT family. In terms of assembly, the glycine cleavage system is composed of four proteins: P, T, L and H.

It carries out the reaction N(6)-[(R)-S(8)-aminomethyldihydrolipoyl]-L-lysyl-[protein] + (6S)-5,6,7,8-tetrahydrofolate = N(6)-[(R)-dihydrolipoyl]-L-lysyl-[protein] + (6R)-5,10-methylene-5,6,7,8-tetrahydrofolate + NH4(+). Functionally, the glycine cleavage system catalyzes the degradation of glycine. The chain is Aminomethyltransferase from Parafrankia sp. (strain EAN1pec).